A 398-amino-acid chain; its full sequence is Cysteine protease ATG4A (398 aa).

The active-site Nucleophile is C77. Residues D279 and H281 contribute to the active site. The short motif at F393 to L396 is the LIR element.

Belongs to the peptidase C54 family. In terms of assembly, interacts with ATG9A; the interaction is direct.

The protein localises to the cytoplasm. The enzyme catalyses [protein]-C-terminal L-amino acid-glycyl-phosphatidylethanolamide + H2O = [protein]-C-terminal L-amino acid-glycine + a 1,2-diacyl-sn-glycero-3-phosphoethanolamine. Inhibited by N-ethylmaleimide. Redox-regulated during autophagy since reducing conditions activate ATG4A whereas an oxidizing environment such as the presence of H(2)O(2) inhibits its activity. Functionally, cysteine protease that plays a key role in autophagy by mediating both proteolytic activation and delipidation of ATG8 family proteins. The protease activity is required for proteolytic activation of ATG8 family proteins: cleaves the C-terminal amino acid of ATG8 proteins to reveal a C-terminal glycine. Exposure of the glycine at the C-terminus is essential for ATG8 proteins conjugation to phosphatidylethanolamine (PE) and insertion to membranes, which is necessary for autophagy. Preferred substrate is GABARAPL2 followed by MAP1LC3A and GABARAP. Protease activity is also required to counteract formation of high-molecular weight conjugates of ATG8 proteins (ATG8ylation): acts as a deubiquitinating-like enzyme that removes ATG8 conjugated to other proteins, such as ATG3. In addition to the protease activity, also mediates delipidation of ATG8 family proteins. Catalyzes delipidation of PE-conjugated forms of ATG8 proteins during macroautophagy. Compared to ATG4B, the major protein for proteolytic activation of ATG8 proteins, shows weaker ability to cleave the C-terminal amino acid of ATG8 proteins, while it displays stronger delipidation activity. Involved in phagophore growth during mitophagy independently of its protease activity and of ATG8 proteins: acts by regulating ATG9A trafficking to mitochondria and promoting phagophore-endoplasmic reticulum contacts during the lipid transfer phase of mitophagy. Its function is as follows. (Microbial infection) Mediates cleavage of an ATG8 protein homolog coded in the genome of cytopathogenic bovine viral diarrhea virus (BVDV). The polypeptide is Cysteine protease ATG4A (Bos taurus (Bovine)).